A 478-amino-acid chain; its full sequence is MILQSNSIAQQIADEGGVEAYLHAQQHKTMLRFLTCGSVDDGKSTLIGRLLHDTRQIYEDQLSTLHTDSKRIGTQGEKLDLALLVDGLQAEREQGITIDVAYRYFSTEKRKFIIADTPGHEQYTRNMATGASTCDLAILLIDARKGVLDQTRRHSFIATLLGIRHLVVAVNKMDLVGFQESVFTQFKDDYLSFAEQLPTDLDIKFVPLSALDGDNVASPSEKMDWYSGPTLLEILESVDVVNARRQQPLRFPVQYVNRPNLDFRGYAGTLSAGVVWVGQKVKVLPSGVESTVARIVTFDGDLTEANPGEAITLVLADEVDISRGDLLVDASETLKAARNALVDVVWMAEQPLVVGQSYDIKVAGKKTRARVENIQYQVEINSLTQRVVENLPLNGIGLVELAFDEPLLLDNYQRNRDTGGMIFIDRLSNVTVGAGLVREALASVYQENHDFSTFELELNALVRRHFPHWGARDLLGGK.

One can recognise a tr-type G domain in the interval 28–244 (KTMLRFLTCG…LESVDVVNAR (217 aa)). The segment at 37–44 (GSVDDGKS) is G1. Position 37-44 (37-44 (GSVDDGKS)) interacts with GTP. The G2 stretch occupies residues 95 to 99 (GITID). The G3 stretch occupies residues 116–119 (DTPG). GTP is bound by residues 116–120 (DTPGH) and 171–174 (NKMD). The interval 171–174 (NKMD) is G4. A G5 region spans residues 209–211 (SAL).

It belongs to the TRAFAC class translation factor GTPase superfamily. Classic translation factor GTPase family. CysN/NodQ subfamily. As to quaternary structure, heterodimer composed of CysD, the smaller subunit, and CysN.

It carries out the reaction sulfate + ATP + H(+) = adenosine 5'-phosphosulfate + diphosphate. Its pathway is sulfur metabolism; hydrogen sulfide biosynthesis; sulfite from sulfate: step 1/3. In terms of biological role, with CysD forms the ATP sulfurylase (ATPS) that catalyzes the adenylation of sulfate producing adenosine 5'-phosphosulfate (APS) and diphosphate, the first enzymatic step in sulfur assimilation pathway. APS synthesis involves the formation of a high-energy phosphoric-sulfuric acid anhydride bond driven by GTP hydrolysis by CysN coupled to ATP hydrolysis by CysD. The sequence is that of Sulfate adenylyltransferase subunit 1 from Yersinia pseudotuberculosis serotype O:1b (strain IP 31758).